The following is a 1023-amino-acid chain: Peroxisome proliferator-activated receptor gamma coactivator 1-beta (1023 aa).

An abolishes DNA transcriptional activity when missing region spans residues 1–91 (MAGNDCGALL…LFQIDSENEA (91 aa)). The disordered stretch occupies residues 122 to 148 (LSCTSASPAPSSAPPSPAPEKPSAPAP). Residues 132–146 (SSAPPSPAPEKPSAP) are compositionally biased toward pro residues. An LXXLL motif 1 motif is present at residues 156 to 160 (LQKLL). Disordered regions lie at residues 165-210 (YPTS…QSQS), 237-278 (LQSP…PGAP), and 302-331 (RKLPPQTPEPLPKACSNPSQQVRSRPWSRH). The short motif at 343-347 (LRELL) is the LXXLL motif 2 element. Disordered stretches follow at residues 369-463 (LTPR…LPWT), 520-567 (RELG…QLPP), 601-623 (TAGLTPPTTPPYKPTEEDPFKPD), and 636-683 (LPSP…GQKR). S384 bears the Phosphoserine mark. Positions 412–422 (LRLEVKREVRR) are enriched in basic and acidic residues. Over residues 429-450 (QEEEDEEEEEEEEEEEKEEEEE) the composition is skewed to acidic residues. Position 524 is a phosphoserine (S524). A compositionally biased stretch (basic and acidic residues) spans 614–623 (PTEEDPFKPD). S638 carries the phosphoserine modification. The short motif at 691–694 (DHDY) is the HCFC1-binding-motif (HBM) element. 2 disordered regions span residues 717–758 (VHLE…LRDH) and 779–867 (DLAS…WSPA). Over residues 793–805 (EDSSSSSGESSFL) the composition is skewed to low complexity. The segment covering 806 to 825 (PEEEEEEGEEEEEDDEEEDS) has biased composition (acidic residues). Positions 849–866 (CSRSRSSSGSSPCHSWSP) are enriched in low complexity. The RRM domain maps to 902–976 (RVVYIQNLSS…RNEPSFQLSY (75 aa)).

As to quaternary structure, interacts with hepatocyte nuclear factor 4-alpha/HNF4A, Sterol regulatory binding transcription factor 1/SREBF1, PPAR-alpha/PPARA, thyroid hormone receptor beta/THRB and host cell factor/HCFC1. Interacts with estrogen-related receptor gamma/ESRRG and alpha/ESRRA. Interacts with PRDM16. Interacts with estrogen receptor alpha/ESR1. In terms of tissue distribution, ubiquitous with higher expression in heart, brain and skeletal muscle.

The protein localises to the nucleus. Its function is as follows. Plays a role of stimulator of transcription factors and nuclear receptors activities. Activates transcriptional activity of estrogen receptor alpha, nuclear respiratory factor 1 (NRF1) and glucocorticoid receptor in the presence of glucocorticoids. May play a role in constitutive non-adrenergic-mediated mitochondrial biogenesis as suggested by increased basal oxygen consumption and mitochondrial number when overexpressed. May be involved in fat oxidation and non-oxidative glucose metabolism and in the regulation of energy expenditure. Induces the expression of PERM1 in the skeletal muscle in an ESRRA-dependent manner. This is Peroxisome proliferator-activated receptor gamma coactivator 1-beta (PPARGC1B) from Homo sapiens (Human).